Here is a 357-residue protein sequence, read N- to C-terminus: UDP-N-acetylglucosamine--N-acetylmuramyl-(pentapeptide) pyrophosphoryl-undecaprenol N-acetylglucosamine transferase (357 aa).

UDP-N-acetyl-alpha-D-glucosamine is bound by residues 13 to 15 (TGG), asparagine 125, arginine 161, serine 189, isoleucine 243, and glutamine 288.

Belongs to the glycosyltransferase 28 family. MurG subfamily.

Its subcellular location is the cell inner membrane. The enzyme catalyses di-trans,octa-cis-undecaprenyl diphospho-N-acetyl-alpha-D-muramoyl-L-alanyl-D-glutamyl-meso-2,6-diaminopimeloyl-D-alanyl-D-alanine + UDP-N-acetyl-alpha-D-glucosamine = di-trans,octa-cis-undecaprenyl diphospho-[N-acetyl-alpha-D-glucosaminyl-(1-&gt;4)]-N-acetyl-alpha-D-muramoyl-L-alanyl-D-glutamyl-meso-2,6-diaminopimeloyl-D-alanyl-D-alanine + UDP + H(+). It participates in cell wall biogenesis; peptidoglycan biosynthesis. Cell wall formation. Catalyzes the transfer of a GlcNAc subunit on undecaprenyl-pyrophosphoryl-MurNAc-pentapeptide (lipid intermediate I) to form undecaprenyl-pyrophosphoryl-MurNAc-(pentapeptide)GlcNAc (lipid intermediate II). The chain is UDP-N-acetylglucosamine--N-acetylmuramyl-(pentapeptide) pyrophosphoryl-undecaprenol N-acetylglucosamine transferase from Polynucleobacter asymbioticus (strain DSM 18221 / CIP 109841 / QLW-P1DMWA-1) (Polynucleobacter necessarius subsp. asymbioticus).